An 88-amino-acid chain; its full sequence is MAYERRSRPSGPRKKFFHRRKYCKFCSDSTIKIDYKRPDILHDYITERGKIMPRRITGSCSKHQRELTQAIKRARSIALLPFVVTEGR.

The protein belongs to the bacterial ribosomal protein bS18 family. Part of the 30S ribosomal subunit. Forms a tight heterodimer with protein bS6.

Binds as a heterodimer with protein bS6 to the central domain of the 16S rRNA, where it helps stabilize the platform of the 30S subunit. The sequence is that of Small ribosomal subunit protein bS18 from Syntrophus aciditrophicus (strain SB).